Reading from the N-terminus, the 614-residue chain is MSGYSSDRDRGRDRGFGAPRFGGSRAGPLSGKKFGNPGEKLVKKKWNLDELPKFEKNFYQEHPDLARRTAQEVETYRRSKEITVRGHNCPKPVLNFYEANFPANVMDVIARQNFTEPTAIQAQGWPVALSGLDMVGVAQTGSGKTLSYLLPAIVHINHQPFLERGDGPICLVLAPTRELAQQVQQVAAEYCRACRLKSTCIYGGAPKGPQIRDLERGVEICIATPGRLIDFLECGKTNLRRTTYLVLDEADRMLDMGFEPQIRKIVDQIRPDRQTLMWSATWPKEVRQLAEDFLKDYIHINIGALELSANHNILQIVDVCHDVEKDEKLIRLMEEIMSEKENKTIVFVETKRRCDELTRKMRRDGWPAMGIHGDKSQQERDWVLNEFKHGKAPILIATDVASRGLDVEDVKFVINYDYPNSSEDYIHRIGRTARSTKTGTAYTFFTPNNIKQVSDLISVLREANQAINPKLLQLVEDRGSGRSRGRGGMKDDRRDRYSAGKRGGFNTFRDRENYDRGYSSLLKRDFGAKTQNGVYSAANYTNGSFGSNFVSAGIQTSFRTGNPTGTYQNGYDSTQQYGSNVPNMHNGMNQQAYAYPATAAAPMIGYPMPTGYSQ.

The segment covering 1–15 (MSGYSSDRDRGRDRG) has biased composition (basic and acidic residues). Positions 1–39 (MSGYSSDRDRGRDRGFGAPRFGGSRAGPLSGKKFGNPGE) are disordered. Phosphoserine is present on S24. N6-acetyllysine; alternate is present on K32. K32 is covalently cross-linked (Glycyl lysine isopeptide (Lys-Gly) (interchain with G-Cter in SUMO2); alternate). An N6-acetyllysine mark is found at K33 and K40. K45 participates in a covalent cross-link: Glycyl lysine isopeptide (Lys-Gly) (interchain with G-Cter in SUMO2). K53 participates in a covalent cross-link: Glycyl lysine isopeptide (Lys-Gly) (interchain with G-Cter in SUMO2); alternate. K53 participates in a covalent cross-link: Glycyl lysine isopeptide (Lys-Gly) (interchain with G-Cter in SUMO); alternate. K53 participates in a covalent cross-link: Glycyl lysine isopeptide (Lys-Gly) (interchain with G-Cter in SUMO1); alternate. The Q motif signature appears at 94–122 (LNFYEANFPANVMDVIARQNFTEPTAIQA). Residues 114-116 (FTE), Q121, and 138-145 (AQTGSGKT) contribute to the ATP site. One can recognise a Helicase ATP-binding domain in the interval 125 to 300 (WPVALSGLDM…EDFLKDYIHI (176 aa)). K236 carries the N6-acetyllysine modification. The short motif at 248–251 (DEAD) is the DEAD box element. Y297 is subject to Phosphotyrosine. Positions 328–475 (KLIRLMEEIM…AINPKLLQLV (148 aa)) constitute a Helicase C-terminal domain. Residues K340, K343, K388, K391, K411, K437, K451, and K470 each participate in a glycyl lysine isopeptide (Lys-Gly) (interchain with G-Cter in SUMO2) cross-link. A disordered region spans residues 477-504 (DRGSGRSRGRGGMKDDRRDRYSAGKRGG). The interval 477–614 (DRGSGRSRGR…GYPMPTGYSQ (138 aa)) is transactivation domain. Position 480 is a phosphoserine (S480). A compositionally biased stretch (basic and acidic residues) spans 488 to 498 (GMKDDRRDRYS). A Phosphoserine modification is found at S520. A Glycyl lysine isopeptide (Lys-Gly) (interchain with G-Cter in SUMO2) cross-link involves residue K523.

Belongs to the DEAD box helicase family. DDX5/DBP2 subfamily. As to quaternary structure, identified in the spliceosome C complex. Component of a ribonucleoprotein complex containing mRNAs and RNA-binding proteins including DDX5, HNRNPH2 and SRSF1 as well as splicing regulator ARVCF. Interacts with RBM4; the interaction occurs in an RNA-independent manner. Interacts with AGO1 and AGO2. Interacts with ESR1, AR, EP300, CREBBP, POLR2A, TP53, RUNX2 and HDAC1. Self-associates. Interacts with DDX17. Interacts with BRDT. The large PER complex involved in the repression of transcriptional termination is composed of at least PER2, CDK9, DDX5, DHX9, NCBP1 and POLR2A (active). Interacts with DHX36; this interaction occurs in a RNA-dependent manner. Interacts with NUPR1. Interacts with ERCC6. Interacts with DDX3X in the cytoplasm; this interaction may be more efficient when both proteins are unphosphorylated. In terms of processing, arg-502 is dimethylated, probably to asymmetric dimethylarginine. Post-translationally, sumoylated; sumoylation, promoted by PIAS1, promotes interaction with HDAC1 and transcriptional repression activity. Sumoylation also significantly increases stability, and reduces polyubiquitination. Polyubiquitinated, leading to proteasomal degradation. In terms of processing, weakly phosphorylated in the G1/S phase of the cell cycle and much more at G2/M, especially at Thr and Tyr residues.

It localises to the nucleus. The protein resides in the nucleolus. The protein localises to the nucleus speckle. It is found in the cytoplasm. The enzyme catalyses ATP + H2O = ADP + phosphate + H(+). Functionally, involved in the alternative regulation of pre-mRNA splicing; its RNA helicase activity is necessary for increasing tau exon 10 inclusion and occurs in a RBM4-dependent manner. Binds to the tau pre-mRNA in the stem-loop region downstream of exon 10. The rate of ATP hydrolysis is highly stimulated by single-stranded RNA. Involved in transcriptional regulation; the function is independent of the RNA helicase activity. Transcriptional coactivator for androgen receptor AR but probably not ESR1. Synergizes with DDX17 and SRA1 RNA to activate MYOD1 transcriptional activity and involved in skeletal muscle differentiation. Transcriptional coactivator for p53/TP53 and involved in p53/TP53 transcriptional response to DNA damage and p53/TP53-dependent apoptosis. Transcriptional coactivator for RUNX2 and involved in regulation of osteoblast differentiation. Acts as a transcriptional repressor in a promoter-specific manner; the function probably involves association with histone deacetylases, such as HDAC1. As component of a large PER complex is involved in the inhibition of 3' transcriptional termination of circadian target genes such as PER1 and NR1D1 and the control of the circadian rhythms. This is Probable ATP-dependent RNA helicase DDX5 (DDX5) from Homo sapiens (Human).